Here is a 168-residue protein sequence, read N- to C-terminus: Siroheme decarboxylase NirH subunit (168 aa).

The protein belongs to the Ahb/Nir family. In terms of assembly, probably forms a complex composed of NirD, NirL, NirG and NirH. All proteins are required for the total conversion of siroheme to didecarboxysiroheme.

The enzyme catalyses siroheme + 2 H(+) = 12,18-didecarboxysiroheme + 2 CO2. Its pathway is porphyrin-containing compound metabolism. In terms of biological role, involved in heme d1 biosynthesis. Catalyzes the decarboxylation of siroheme into didecarboxysiroheme. This chain is Siroheme decarboxylase NirH subunit, found in Stutzerimonas stutzeri (Pseudomonas stutzeri).